A 216-amino-acid chain; its full sequence is Somatotropin (216 aa).

The first 26 residues, 1–26 (MAAGPRTSALLAFALLCLPWTREVGA), serve as a signal peptide directing secretion. A Zn(2+)-binding site is contributed by His45. Cys78 and Cys189 are disulfide-bonded. Ser131 is subject to Phosphoserine. Glu198 provides a ligand contact to Zn(2+). A disulfide bridge connects residues Cys206 and Cys214.

It belongs to the somatotropin/prolactin family.

The protein localises to the secreted. In terms of biological role, plays an important role in growth control. Its major role in stimulating body growth is to stimulate the liver and other tissues to secrete IGF1. It stimulates both the differentiation and proliferation of myoblasts. It also stimulates amino acid uptake and protein synthesis in muscle and other tissues. The protein is Somatotropin (GH1) of Sus scrofa (Pig).